Here is a 158-residue protein sequence, read N- to C-terminus: NADH-quinone oxidoreductase subunit B (158 aa).

[4Fe-4S] cluster-binding residues include Cys-37, Cys-38, Cys-102, and Cys-132.

The protein belongs to the complex I 20 kDa subunit family. As to quaternary structure, NDH-1 is composed of 14 different subunits. Subunits NuoB, C, D, E, F, and G constitute the peripheral sector of the complex. Requires [4Fe-4S] cluster as cofactor.

Its subcellular location is the cell inner membrane. It carries out the reaction a quinone + NADH + 5 H(+)(in) = a quinol + NAD(+) + 4 H(+)(out). Functionally, NDH-1 shuttles electrons from NADH, via FMN and iron-sulfur (Fe-S) centers, to quinones in the respiratory chain. Couples the redox reaction to proton translocation (for every two electrons transferred, four hydrogen ions are translocated across the cytoplasmic membrane), and thus conserves the redox energy in a proton gradient. The sequence is that of NADH-quinone oxidoreductase subunit B from Bordetella parapertussis (strain 12822 / ATCC BAA-587 / NCTC 13253).